Reading from the N-terminus, the 330-residue chain is Fructose-1,6-bisphosphatase class 1 (330 aa).

Mg(2+) is bound by residues Glu84, Asp103, Leu105, and Asp106. Residues 106–109 (DGSS), Asn196, and Lys262 contribute to the substrate site. Glu268 provides a ligand contact to Mg(2+).

It belongs to the FBPase class 1 family. In terms of assembly, homotetramer. Mg(2+) serves as cofactor.

It localises to the cytoplasm. The catalysed reaction is beta-D-fructose 1,6-bisphosphate + H2O = beta-D-fructose 6-phosphate + phosphate. The protein operates within carbohydrate biosynthesis; gluconeogenesis. This chain is Fructose-1,6-bisphosphatase class 1, found in Shewanella baltica (strain OS185).